We begin with the raw amino-acid sequence, 171 residues long: Neuronal vesicle trafficking-associated protein 2 (171 aa).

The disordered stretch occupies residues 1-21; it reads MVKLNGNPGEKGAKPPSVEDG. Residues 1–71 are Cytoplasmic-facing; that stretch reads MVKLNGNPGE…FRVPKIAEFT (71 aa). A helical; Signal-anchor for type II membrane protein transmembrane segment spans residues 72–92; it reads VTILVSLALAFLACIVFLVVY. The Lumenal portion of the chain corresponds to 93–171; it reads KAFTYDHSCP…EPKPPKTQGH (79 aa).

This sequence belongs to the NSG family.

It is found in the membrane. The protein localises to the golgi apparatus. The protein resides in the trans-Golgi network membrane. Its subcellular location is the cell projection. It localises to the dendrite. It is found in the endosome membrane. The protein localises to the early endosome membrane. The protein resides in the late endosome membrane. Its subcellular location is the lysosome lumen. It localises to the cytoplasmic vesicle membrane. It is found in the golgi stack membrane. The protein localises to the endosome. The protein resides in the multivesicular body membrane. This is Neuronal vesicle trafficking-associated protein 2 from Rattus norvegicus (Rat).